Consider the following 87-residue polypeptide: Phosphoribosyl-ATP pyrophosphatase (87 aa).

This sequence belongs to the PRA-PH family.

Its subcellular location is the cytoplasm. The catalysed reaction is 1-(5-phospho-beta-D-ribosyl)-ATP + H2O = 1-(5-phospho-beta-D-ribosyl)-5'-AMP + diphosphate + H(+). Its pathway is amino-acid biosynthesis; L-histidine biosynthesis; L-histidine from 5-phospho-alpha-D-ribose 1-diphosphate: step 2/9. This is Phosphoribosyl-ATP pyrophosphatase from Thermobifida fusca (strain YX).